We begin with the raw amino-acid sequence, 91 residues long: N.vectensis toxin 8 (91 aa).

A signal peptide spans 1 to 26; sequence MNSLLKVAVVCLVMLVACFVPRVILT. Cystine bridges form between Cys45–Cys76, Cys47–Cys67, and Cys60–Cys77.

In terms of tissue distribution, expressed in ectodermal gland cells.

Functionally, has toxic effects on zebrafish larvae. It causes contractile paralysis and twitching of the tail within 20 minutes, followed by death within 30 minutes. Does not show any toxicity when injected into arthropods (cherry shrimps or grass shrimps). The protein is N.vectensis toxin 8 of Nematostella vectensis (Starlet sea anemone).